The primary structure comprises 68 residues: Sec-independent protein translocase protein TatA (68 aa).

The helical transmembrane segment at 1–21 threads the bilayer; sequence MGSFSIWHWLIVLVVVLLLFG. A disordered region spans residues 46 to 68; it reads EEAASADKTIDGKTVEHKSDEVR. The segment covering 53-68 has biased composition (basic and acidic residues); it reads KTIDGKTVEHKSDEVR.

The protein belongs to the TatA/E family. In terms of assembly, the Tat system comprises two distinct complexes: a TatABC complex, containing multiple copies of TatA, TatB and TatC subunits, and a separate TatA complex, containing only TatA subunits. Substrates initially bind to the TatABC complex, which probably triggers association of the separate TatA complex to form the active translocon.

The protein resides in the cell inner membrane. Functionally, part of the twin-arginine translocation (Tat) system that transports large folded proteins containing a characteristic twin-arginine motif in their signal peptide across membranes. TatA could form the protein-conducting channel of the Tat system. This chain is Sec-independent protein translocase protein TatA, found in Sinorhizobium fredii (strain NBRC 101917 / NGR234).